The sequence spans 160 residues: Heme transporter hrg-5 (160 aa).

A helical transmembrane segment spans residues 21 to 41 (IALTILDILIGFSNILSYAIQ). N-linked (GlcNAc...) asparagine glycosylation occurs at asparagine 44. 3 helical membrane passes run 47–67 (ALTL…MFLA), 89–109 (ITLG…AGVT), and 123–142 (FTGL…ALLA). Asparagine 144 carries an N-linked (GlcNAc...) asparagine glycan.

Belongs to the HRG family.

The protein localises to the membrane. Heme transporter. The chain is Heme transporter hrg-5 (hrg-5) from Caenorhabditis elegans.